We begin with the raw amino-acid sequence, 191 residues long: Protein Ves (191 aa).

This sequence belongs to the Ves family.

The sequence is that of Protein Ves from Escherichia coli (strain UTI89 / UPEC).